Consider the following 571-residue polypeptide: MALPKDAIPSLSECQCGICMEILVEPVTLPCNHTLCKPCFQSTVEKASLCCPFCRRRVSSWTRYHTRRNSLVNVELWTIIQKHYPRECKLRASGQESEEVADDYQPVRLLSKPGELRREYEEEISKVAAERRASEEEENKASEEYIQRLLAEEEEEEKRQAEKRRRAMEEQLKSDEELARKLSIDINNFCEGSISASPLNSRKSDPVTPKSEKKSKNKQRNTGDIQKYLTPKSQFGSASHSEAVQEVRKDSVSKDIDSSDRKSPTGQDTEIEDMPTLSPQISLGVGEQGADSSIESPMPWLCACGAEWYHEGNVKTRPSNHGKELCVLSHERPKTRVPYSKETAVMPCGRTESGCAPTSGVTQTNGNNTGETENEESCLLISKEISKRKNQESSFEAVKDPCFSAKRRKVSPESSPDQEETEINFTQKLIDLEHLLFERHKQEEQDRLLALQLQKEVDKEQMVPNRQKGSPDEYHLRATSSPPDKVLNGQRKNPKDGNFKRQTHTKHPTPERGSRDKNRQVSLKMQLKQSVNRRKMPNSTRDHCKVSKSAHSLQPSISQKSVFQMFQRCTK.

The segment at 16-55 (CGICMEILVEPVTLPCNHTLCKPCFQSTVEKASLCCPFCR) adopts an RING-type zinc-finger fold. At S70 the chain carries Phosphoserine. An LR motif 1 motif is present at residues 110–128 (LSKPGELRREYEEEISKVA). Position 134 is a phosphoserine (S134). A UMI motif motif is present at residues 143–151 (EEYIQRLLA). Disordered stretches follow at residues 151-174 (AEEE…QLKS) and 191-292 (EGSI…GADS). The short motif at 168–191 (MEEQLKSDEELARKLSIDINNFCE) is the MIU motif 1 element. S197 carries the post-translational modification Phosphoserine. Residues 202 to 214 (RKSDPVTPKSEKK) show a composition bias toward basic and acidic residues. K210 participates in a covalent cross-link: Glycyl lysine isopeptide (Lys-Gly) (interchain with G-Cter in SUMO2). The span at 231–242 (PKSQFGSASHSE) shows a compositional bias: polar residues. Over residues 243–263 (AVQEVRKDSVSKDIDSSDRKS) the composition is skewed to basic and acidic residues. T362 is modified (phosphothreonine). 2 disordered regions span residues 390-422 (NQES…EETE) and 459-560 (KEQM…ISQK). Phosphoserine occurs at positions 411, 414, and 415. The short motif at 439 to 462 (RHKQEEQDRLLALQLQKEVDKEQM) is the MIU motif 2 element. The LR motif 2 signature appears at 466–477 (RQKGSPDEYHLR). A Phosphoserine modification is found at S470. The segment covering 508–519 (PTPERGSRDKNR) has biased composition (basic and acidic residues). 2 stretches are compositionally biased toward polar residues: residues 520-530 (QVSLKMQLKQS) and 549-560 (SAHSLQPSISQK). K528 is covalently cross-linked (Glycyl lysine isopeptide (Lys-Gly) (interchain with G-Cter in SUMO2)).

Belongs to the RNF168 family. Monomer. Interacts with UBE2N/UBC13. Sumoylated with SUMO1 by PIAS4 in response to double-strand breaks (DSBs). In terms of processing, ubiquitinated.

It is found in the nucleus. The enzyme catalyses S-ubiquitinyl-[E2 ubiquitin-conjugating enzyme]-L-cysteine + [acceptor protein]-L-lysine = [E2 ubiquitin-conjugating enzyme]-L-cysteine + N(6)-ubiquitinyl-[acceptor protein]-L-lysine.. It participates in protein modification; protein ubiquitination. Its function is as follows. E3 ubiquitin-protein ligase required for accumulation of repair proteins to sites of DNA damage. Acts with UBE2N/UBC13 to amplify the RNF8-dependent histone ubiquitination. Recruited to sites of DNA damage at double-strand breaks (DSBs) by binding to ubiquitinated histone H2A and H2AX and amplifies the RNF8-dependent H2A ubiquitination, promoting the formation of 'Lys-63'-linked ubiquitin conjugates. This leads to concentrate ubiquitinated histones H2A and H2AX at DNA lesions to the threshold required for recruitment of TP53BP1 and BRCA1. Also recruited at DNA interstrand cross-links (ICLs) sites and promotes accumulation of 'Lys-63'-linked ubiquitination of histones H2A and H2AX, leading to recruitment of FAAP20/C1orf86 and Fanconi anemia (FA) complex, followed by interstrand cross-link repair. H2A ubiquitination also mediates the ATM-dependent transcriptional silencing at regions flanking DSBs in cis, a mechanism to avoid collision between transcription and repair intermediates. Also involved in class switch recombination in immune system, via its role in regulation of DSBs repair. Following DNA damage, promotes the ubiquitination and degradation of JMJD2A/KDM4A in collaboration with RNF8, leading to unmask H4K20me2 mark and promote the recruitment of TP53BP1 at DNA damage sites. Not able to initiate 'Lys-63'-linked ubiquitination in vitro; possibly due to partial occlusion of the UBE2N/UBC13-binding region. Catalyzes monoubiquitination of 'Lys-13' and 'Lys-15' of nucleosomal histone H2A (H2AK13Ub and H2AK15Ub, respectively). This is E3 ubiquitin-protein ligase RNF168 from Homo sapiens (Human).